The following is a 317-amino-acid chain: Zinc metalloproteinase/disintegrin (317 aa).

A propeptide spanning residues 1 to 26 is cleaved from the precursor; it reads EAPKMCGVTQNWESYEPIKKASQSNL. Residues 32 to 228 form the Peptidase M12B domain; the sequence is RYIELVIVAD…QKPQCILNKP (197 aa). Glu-35 and Asp-119 together coordinate Ca(2+). Intrachain disulfides connect Cys-143-Cys-223, Cys-183-Cys-207, and Cys-185-Cys-190. His-168 contacts Zn(2+). Residue Glu-169 is part of the active site. Residues His-172 and His-178 each contribute to the Zn(2+) site. Positions 223 and 226 each coordinate Ca(2+). Positions 229–244 are excised as a propeptide; the sequence is LRTDTVSTPVSGNELL. Residues 236 to 317 enclose the Disintegrin domain; that stretch reads TPVSGNELLE…AGCPRNPFHA (82 aa). 6 cysteine pairs are disulfide-bonded: Cys-250-Cys-259, Cys-252-Cys-260, Cys-265-Cys-279, Cys-273-Cys-303, Cys-278-Cys-282, and Cys-291-Cys-310. A Cell attachment site motif is present at residues 295–297; the sequence is RGD.

The protein belongs to the venom metalloproteinase (M12B) family. P-II subfamily. P-IIa sub-subfamily. Monomer. The cofactor is Zn(2+). In terms of tissue distribution, expressed by the venom gland.

The protein resides in the secreted. Its function is as follows. metalloproteinase that impairs hemostasis in the envenomed animal. Inhibits GPIIb/GPIIIa (ITGA2B/ITGB3) binding to immobilized fibrinogen with an IC(50) of 2.2 nM and ADP-induced platelet aggregation with an IC(50) of 131 nM, respectively. Inhibits angiogenesis. By binding to vitronectin receptor (alpha-V/beta-3 (ITGAV/ITGB3)), also induces apoptosis of endothelial cells by blocking their attachment to extracellular matrix proteins. Functionally, inhibits platelet aggregation induced by ADP (IC(50) is 30 nM), collagen (IC(50) is 500 nM), thrombin and epinephrin (IC(50) is 160 nM). This chain is Zinc metalloproteinase/disintegrin, found in Gloydius brevicauda (Korean slamosa snake).